The following is a 394-amino-acid chain: Glycogen synthase kinase 1 (394 aa).

The Protein kinase domain maps to 35–318 (YTQCKIVGNG…AIDAMVHPFF (284 aa)). ATP is bound by residues 41–49 (VGNGSFGVV) and lysine 64.

The protein belongs to the protein kinase superfamily. CMGC Ser/Thr protein kinase family. GSK-3 subfamily.

The protein localises to the cytoplasm. The catalysed reaction is L-seryl-[protein] + ATP = O-phospho-L-seryl-[protein] + ADP + H(+). Its function is as follows. Protein kinase that acts downstream of the MPS1 MAPK cascade as a highly conservative signal modulator that dictates growth, conidiation and pathogenicity. Phosphorylates HAT1 at 'Ser-8' to block its translocation from the nucleus to the cytoplasm where HAT1 positively regulates appressorium development and pathogenicity. The protein is Glycogen synthase kinase 1 of Pyricularia oryzae (Rice blast fungus).